Reading from the N-terminus, the 317-residue chain is Zinc transporter ZIP3 (317 aa).

Topologically, residues 1 to 3 are extracellular; that stretch reads MTK. A helical membrane pass occupies residues 4-24; the sequence is LLVAKVLCMVGVFFFMLLGSL. The Cytoplasmic segment spans residues 25–42; the sequence is LPVKVIEADLEKAHRSKK. A helical membrane pass occupies residues 43–63; it reads VLSLCNTFGGGVFLATCFNAL. Over 64–85 the chain is Extracellular; the sequence is LPAVRDKLQQVLSLGHISTDYP. Residues 86-106 traverse the membrane as a helical segment; the sequence is LAETLMMVGFFLTVFVEQLVL. At 107 to 172 the chain is on the cytoplasmic side; that stretch reads TFRRERPPFI…RELGRPGPLR (66 aa). Phosphoserine occurs at positions 125 and 129. The helical transmembrane segment at 173-193 threads the bilayer; it reads LLSLVFALSAHSVFEGLALGL. Residues 194-199 lie on the Extracellular side of the membrane; it reads QEEGER. The helical transmembrane segment at 200–220 threads the bilayer; that stretch reads VVSLFVGVAIHETLVAVALGI. Residues 221-232 lie on the Cytoplasmic side of the membrane; that stretch reads SMARSAVPLRDA. Residues 233-253 form a helical membrane-spanning segment; sequence AKLAVTVSAMIPVGIGLGLGI. The Extracellular segment spans residues 254-265; sequence ESARSVASSVAS. Residues 266-286 form a helical membrane-spanning segment; it reads ALLQGLAGGTFLFVTFLEILA. The Cytoplasmic segment spans residues 287–294; that stretch reads KELEERSE. The chain crosses the membrane as a helical span at residues 295–315; it reads QLLKVLFLVLGYAVLAGMVFL. Residues 316 to 317 lie on the Extracellular side of the membrane; the sequence is KW.

This sequence belongs to the ZIP transporter (TC 2.A.5) family. As to expression, highly expressed in the testes. Highly expressed in dentate gyrus granule cells of the hippocampus. Expressed in the mammary gland.

The protein localises to the cell membrane. It localises to the apical cell membrane. It catalyses the reaction Zn(2+)(in) = Zn(2+)(out). In terms of biological role, transporter for the divalent cation Zn(2+). Mediates the influx of Zn(2+) into cells from extracellular space. Controls Zn(2+) accumulation into dentate gyrus granule cells in the hippocampus. Mediates Zn(2+) reuptake from the secreted milk within the alveolar lumen. This is Zinc transporter ZIP3 (Slc39a3) from Mus musculus (Mouse).